The chain runs to 462 residues: Proline--tRNA ligase (462 aa).

Belongs to the class-II aminoacyl-tRNA synthetase family. ProS type 3 subfamily. As to quaternary structure, homodimer.

It localises to the cytoplasm. The enzyme catalyses tRNA(Pro) + L-proline + ATP = L-prolyl-tRNA(Pro) + AMP + diphosphate. In terms of biological role, catalyzes the attachment of proline to tRNA(Pro) in a two-step reaction: proline is first activated by ATP to form Pro-AMP and then transferred to the acceptor end of tRNA(Pro). This is Proline--tRNA ligase from Thermoplasma acidophilum (strain ATCC 25905 / DSM 1728 / JCM 9062 / NBRC 15155 / AMRC-C165).